Reading from the N-terminus, the 98-residue chain is Large ribosomal subunit protein uL23 (98 aa).

Belongs to the universal ribosomal protein uL23 family. In terms of assembly, part of the 50S ribosomal subunit. Contacts protein L29, and trigger factor when it is bound to the ribosome.

One of the early assembly proteins it binds 23S rRNA. One of the proteins that surrounds the polypeptide exit tunnel on the outside of the ribosome. Forms the main docking site for trigger factor binding to the ribosome. The chain is Large ribosomal subunit protein uL23 from Lactobacillus delbrueckii subsp. bulgaricus (strain ATCC 11842 / DSM 20081 / BCRC 10696 / JCM 1002 / NBRC 13953 / NCIMB 11778 / NCTC 12712 / WDCM 00102 / Lb 14).